Here is a 461-residue protein sequence, read N- to C-terminus: Ornithine decarboxylase (461 aa).

Lysine 69 carries the post-translational modification N6-(pyridoxal phosphate)lysine. Residues serine 200, glycine 237, and 274–277 each bind pyridoxal 5'-phosphate; that span reads EPGR. Serine 303 carries the phosphoserine; by CK2 modification. Residue 331–332 participates in substrate binding; sequence YD. The active-site Proton donor; shared with dimeric partner is the cysteine 360. The residue at position 360 (cysteine 360) is an S-nitrosocysteine. Aspartate 361 is a binding site for substrate. Tyrosine 389 serves as a coordination point for pyridoxal 5'-phosphate.

It belongs to the Orn/Lys/Arg decarboxylase class-II family. As to quaternary structure, homodimer. Only the dimer is catalytically active, as the active sites are constructed of residues from both monomers. Requires pyridoxal 5'-phosphate as cofactor.

It catalyses the reaction L-ornithine + H(+) = putrescine + CO2. It participates in amine and polyamine biosynthesis; putrescine biosynthesis via L-ornithine pathway; putrescine from L-ornithine: step 1/1. With respect to regulation, inhibited by antizymes (AZs) OAZ1, OAZ2 and OAZ3 in response to polyamine levels. AZs inhibit the assembly of the functional homodimer by binding to ODC monomers. Additionally, OAZ1 targets ODC monomers for ubiquitin-independent proteolytic destruction by the 26S proteasome. In terms of biological role, catalyzes the first and rate-limiting step of polyamine biosynthesis that converts ornithine into putrescine, which is the precursor for the polyamines, spermidine and spermine. Polyamines are essential for cell proliferation and are implicated in cellular processes, ranging from DNA replication to apoptosis. The sequence is that of Ornithine decarboxylase (Odc1) from Mus pahari (Gairdner's shrew-mouse).